Reading from the N-terminus, the 77-residue chain is Translation initiation factor IF-1, chloroplastic (77 aa).

Residues 1 to 71 (MKEQKLIHEG…TRGRIIYRLR (71 aa)) form the S1-like domain.

The protein belongs to the IF-1 family. In terms of assembly, component of the 30S ribosomal translation pre-initiation complex which assembles on the 30S ribosome in the order IF-2 and IF-3, IF-1 and N-formylmethionyl-tRNA(fMet); mRNA recruitment can occur at any time during PIC assembly.

The protein localises to the plastid. Its subcellular location is the chloroplast. Its function is as follows. One of the essential components for the initiation of protein synthesis. Stabilizes the binding of IF-2 and IF-3 on the 30S subunit to which N-formylmethionyl-tRNA(fMet) subsequently binds. Helps modulate mRNA selection, yielding the 30S pre-initiation complex (PIC). Upon addition of the 50S ribosomal subunit IF-1, IF-2 and IF-3 are released leaving the mature 70S translation initiation complex. The polypeptide is Translation initiation factor IF-1, chloroplastic (Liriodendron tulipifera (Tuliptree)).